The primary structure comprises 260 residues: Acyl-[acyl-carrier-protein]--UDP-N-acetylglucosamine O-acyltransferase (260 aa).

It belongs to the transferase hexapeptide repeat family. LpxA subfamily. In terms of assembly, homotrimer.

Its subcellular location is the cytoplasm. The catalysed reaction is a (3R)-hydroxyacyl-[ACP] + UDP-N-acetyl-alpha-D-glucosamine = a UDP-3-O-[(3R)-3-hydroxyacyl]-N-acetyl-alpha-D-glucosamine + holo-[ACP]. It participates in glycolipid biosynthesis; lipid IV(A) biosynthesis; lipid IV(A) from (3R)-3-hydroxytetradecanoyl-[acyl-carrier-protein] and UDP-N-acetyl-alpha-D-glucosamine: step 1/6. In terms of biological role, involved in the biosynthesis of lipid A, a phosphorylated glycolipid that anchors the lipopolysaccharide to the outer membrane of the cell. The polypeptide is Acyl-[acyl-carrier-protein]--UDP-N-acetylglucosamine O-acyltransferase (Aliarcobacter butzleri (strain RM4018) (Arcobacter butzleri)).